The sequence spans 100 residues: Esterase PE11 (100 aa).

The 91-residue stretch at 4–94 folds into the PE domain; sequence VTTRPDSIGE…TSYWLTELAN (91 aa).

It belongs to the mycobacterial PE family.

It localises to the secreted. Its subcellular location is the cell wall. It catalyses the reaction an acetyl ester + H2O = an aliphatic alcohol + acetate + H(+). The catalysed reaction is a butanoate ester + H2O = an aliphatic alcohol + butanoate + H(+). It carries out the reaction an octanoate ester + H2O = an aliphatic alcohol + octanoate + H(+). Its function is as follows. Involved in cell wall lipids remodeling and in virulence. Restricts the biofilm growth and is essential for the optimal intracellular survival of M.tuberculosis. Shows esterase activity with a preference for short-chain esters, particularly pNP-acetate (C2) and pNP-butyrate (C4). Has weaker activity with pNP-octanoate (C8), pNP-laurate (C12) and pNP-myristate (C14). Shows weak long-chain triacylglycerol (TAG) hydrolase activity in vitro. Not necessary for PPE17 stability or for its localization on the mycobacterial surface. This chain is Esterase PE11, found in Mycobacterium tuberculosis (strain ATCC 25618 / H37Rv).